Reading from the N-terminus, the 463-residue chain is Cis-zeatin O-glucosyltransferase 2 (463 aa).

His-21 serves as the catalytic Proton acceptor. His-21 and Asn-91 together coordinate an anthocyanidin. Asp-127 (charge relay) is an active-site residue. Residues Ala-339, Gln-341, His-356, Trp-359, Asn-360, Ser-361, Glu-364, Asp-380, and Gln-381 each contribute to the UDP-alpha-D-glucose site.

It belongs to the UDP-glycosyltransferase family. In terms of tissue distribution, highly expressed in root. Expressed at much lower level in kernel. Weakly or not expressed in expressed in stems and leaves.

It carries out the reaction cis-zeatin + UDP-alpha-D-glucose = O-beta-D-glucosyl-cis-zeatin + UDP + H(+). In terms of biological role, utilizes UDP-glucose as the sugar donor and catalyzes the formation of O-beta-D-glucosyl-cis-zeatin from cis-zeatin. May regulate active versus storage forms of cytokinins and could have an impact on seed growth. This chain is Cis-zeatin O-glucosyltransferase 2, found in Zea mays (Maize).